Reading from the N-terminus, the 322-residue chain is Transcription factor Atoh8 (322 aa).

Disordered regions lie at residues 77 to 96 (PVPA…DTAR), 101 to 144 (IRAP…EAHS), and 159 to 221 (PPAR…ATAA). A compositionally biased stretch (basic and acidic residues) spans 101–111 (IRAPEVSDARK). Residues 231 to 244 (TRRLLANARERTRV) form a basic motif; degenerate region. The bHLH domain occupies 231-283 (TRRLLANARERTRVHTISAAFEALRKQVPCYSYGQKLSKLAILRIACNYILSL). The segment at 245–283 (HTISAAFEALRKQVPCYSYGQKLSKLAILRIACNYILSL) is helix-loop-helix motif.

In terms of assembly, efficient DNA binding requires dimerization with another bHLH protein. Interacts with NEUROG3 and NEUROD1. Interacts with ZFPM2; mediates indirect interaction with GATA4. Forms a heterodimer with TCF3; repress transcription of TCF3 and TCF3/NEUROG3 dimer-induced transactivation of E box-dependent promoters. As to expression, expressed by subsets of mature neurons. Expressed in kidney (podocytes). Expression is restricted to the atria, lung mesenchyme, and vascular smooth muscle.

It localises to the nucleus. The protein resides in the nucleus speckle. Its subcellular location is the cytoplasm. Its function is as follows. Transcription factor that binds a palindromic (canonical) core consensus DNA sequence 5'-CANNTG- 3' known as an E-box element, possibly as a heterodimer with other bHLH proteins. Regulates endothelial cell proliferation, migration and tube-like structures formation. Modulates endothelial cell differentiation through NOS3. May be implicated in specification and differentiation of neuronal cell lineages in the brain. May participate in kidney development and may be involved in podocyte differentiation. During early embryonic development is involved in tissue-specific differentiation processes that are dependent on class II bHLH factors and namely modulates the differentiation program initiated by the pro-endocrine factor NEUROG3. During myogenesis, may play a role during the transition of myoblasts from the proliferative phase to the differentiation phase. Positively regulates HAMP transcription in two ways, firstly by acting directly on the HAMP promoter via E-boxes binding and indirectly through increased phosphorylation of SMAD protein complex. Repress NEUROG3-dependent gene activation in a gene-specific manner through at least two mechanisms; requires only either the sequestering of a general partner such as TCF3 through heterodimerization, either also requires binding of the bHLH domain to DNA via a basic motif. The polypeptide is Transcription factor Atoh8 (Mus musculus (Mouse)).